Here is a 548-residue protein sequence, read N- to C-terminus: DNA-binding protein REPIN1 (548 aa).

The disordered stretch occupies residues 1-47 (MLERRCRGPTAMGPAHPWLFSGPSQESSQPNRGLRYQGKSVAQPGGP). Residues 22-31 (GPSQESSQPN) show a composition bias toward polar residues. S27 bears the Phosphoserine mark. K39 bears the N6-acetyllysine mark. The segment at 53 to 75 (HRCAHCRKRFPGWVALWLHTRRC) adopts a C2H2-type 1; atypical zinc-finger fold. 2 C2H2-type zinc fingers span residues 81 to 103 (LPCH…LQVH) and 112 to 134 (FICH…LRAH). A C2H2-type 4; atypical zinc finger spans residues 141–163 (ITCPECNKRFWRQKQLRAHLRRC). 11 C2H2-type zinc fingers span residues 173 to 195 (FICG…KRVH), 232 to 254 (FQCA…RRVH), 260 to 282 (HQCP…RRIH), 288 to 310 (YPCT…SKIH), 356 to 378 (HSCT…QRQH), 384 to 406 (FTCT…SRVH), 412 to 434 (FACE…RRDH), 440 to 462 (FVCP…RRIH), 468 to 490 (YVCP…RRIH), 496 to 518 (YACP…RKSH), and 524 to 546 (FCCA…QKKH). An N6-acetyllysine modification is found at K272.

In terms of assembly, homodimers and homomultimers. Found in a complex with RIP60 and RIP100. In terms of tissue distribution, expressed in the liver and in subcutaneous and visceral adipose tissue.

It is found in the nucleus. The protein localises to the cytoplasm. It localises to the cytosol. Its function is as follows. Sequence-specific double-stranded DNA-binding protein. Binds ATT-rich and T-rich DNA sequences and facilitates DNA bending. May regulate the expression of genes involved in cellular fatty acid import, including SCARB1/CD36, and genes involved in lipid droplet formation. May regulate the expression of LCN2, and thereby influence iron metabolism and apoptosis-related pathways. May regulate the expression of genes involved in glucose transport. The polypeptide is DNA-binding protein REPIN1 (Repin1) (Rattus norvegicus (Rat)).